The following is a 430-amino-acid chain: Dihydroorotase (430 aa).

Zn(2+) is bound by residues H57 and H59. Residues 59–61 (HLR) and N91 each bind substrate. D151, H178, and H231 together coordinate Zn(2+). Position 277 (N277) interacts with substrate. D304 contributes to the Zn(2+) binding site. D304 is an active-site residue. Residues H308 and 322-323 (PG) contribute to the substrate site.

The protein belongs to the metallo-dependent hydrolases superfamily. DHOase family. Class I DHOase subfamily. Zn(2+) is required as a cofactor.

It catalyses the reaction (S)-dihydroorotate + H2O = N-carbamoyl-L-aspartate + H(+). The protein operates within pyrimidine metabolism; UMP biosynthesis via de novo pathway; (S)-dihydroorotate from bicarbonate: step 3/3. Its function is as follows. Catalyzes the reversible cyclization of carbamoyl aspartate to dihydroorotate. The chain is Dihydroorotase from Mycobacterium leprae (strain TN).